A 1463-amino-acid polypeptide reads, in one-letter code: MSNSFEILMNQLGMPAEMRQAPALAQANIERVVVHKISKVWEFHFVFSNILPIEIFLELKKGLSEEFSKTGNKAVFEIKARSQEFSNQLLQSYYREAFSEGPCASQGFKSLYQNLQVRAEGNQLFIEGSEAIDKEHFKKNHLPNLAKQLEKFGFPTFNCQVEKNDVLTQEQEEAFHAENEQIVQAANEEALRAMEQLEQMAPPPAEEKPVFDFQAKKAAAKPKLDKAEITPMIEVTTEENRLVFEGVVFDVEQKVTRTGRVLINFKMTDYTSSFSMQKWVKNEEEAQKFDLIKKNSWLRVRGNVEMNNFTRDLTMNVQDLQEVVHYERKDLMPEGERRVEFHAHTNMSTMDALPEVEEIVATAAKWGHKAVAITDHGNVQSFPHGYKAAKKAGIQLIYGIEANIVEDRVPIVYNEVEMDLSEATYVVFDVETTGLSAIYNDLIQVAASKMYKGNVIAEFDEFINPGHPLSAFTTELTGITDDHVKNAKPLEQVLQEFQEFCKDTVLVAHNATFDVGFMNANYERHDLPKISQPVIDTLEFARNLYPEYKRHGLGPLTKRFGVALEHHHMANYDAEATGRLLFIFIKEVAEKHGVTDLARLNIDLISPDSYKKARIKHATIYVKNQVGLKNIFKLVSLSNTKYFEGVSRIPRTVLDAHREGLILGSACSEGEVFDVVVSQGVDAAVEVAKYYDFIEVMPPAIYAPLIAKEQVKDMEELQTIIKSLIEVGDRLGKPVLATGNVHYIEPEEEIYREIIVRSLGQGAMINRTIGHGEHAQPAPLPKAHFRTTNEMLDEFAFLGEELARKLVIENTNALAEIFEPVEVVKGDLYTPFIDKAEETVAELTYKKAFEIYGNPLPDIVDLRIEKELTSILGNGFAVIYLASQMLVQRSNERGYLVGSRGSVGSSFVATMIGITEVNPLSPHYVCGQCQYSEFITDGSYGSGFDMPHKDCPNCGHKLSKNGQDIPFETFLGFDGDKVPDIDLNFSGEDQPSAHLDVRDIFGEEYAFRAGTVGTVAAKTAYGFVKGYERDYGKFYRDAEVERLAQGAAGVKRTTGQHPGGIVVIPNYMDVYDFTPVQYPADDVTAEWQTTHFNFHDIDENVLKLDVLGHDDPTMIRKLQDLSGIDPNKIPMDDEGVMALFSGTDVLGVTPEQIGTPTGMLGIPEFGTNFVRGMVDETHPTTFAELLQLSGLSHGTDVWLGNAQDLIKQGIADLSTVIGCRDDIMVYLMHAGLEPKMAFTIMERVRKGLWLKISEEERNGYIEAMKANKVPEWYIESCGKIKYMFPKAHAAAYVMMALRVAYFKVHHPIYYYCAYFSIRAKAFDIKTMGAGLEAIKRRMEEISEKRKNNEASNVEIDLYTTLEIVNEMWERGFKFGKLDLYRSQATEFLIDGDTLIPPFVAMDGLGENVAKQLVRAREEGEFLSKTELRKRGGLSSTLVEKMDEMGILGNMPEDNQLSLFDELF.

The 157-residue stretch at 425–581 (YVVFDVETTG…YDAEATGRLL (157 aa)) folds into the Exonuclease domain.

Belongs to the DNA polymerase type-C family. PolC subfamily.

Its subcellular location is the cytoplasm. It carries out the reaction DNA(n) + a 2'-deoxyribonucleoside 5'-triphosphate = DNA(n+1) + diphosphate. Its function is as follows. Required for replicative DNA synthesis. This DNA polymerase also exhibits 3' to 5' exonuclease activity. The chain is DNA polymerase III PolC-type from Streptococcus pneumoniae serotype 2 (strain D39 / NCTC 7466).